Here is a 200-residue protein sequence, read N- to C-terminus: Pyridoxal 5'-phosphate synthase subunit PdxT (200 aa).

52–54 (GES) provides a ligand contact to L-glutamine. The Nucleophile role is filled by cysteine 84. L-glutamine contacts are provided by residues arginine 116 and 145–146 (IR). Catalysis depends on charge relay system residues histidine 181 and glutamate 183.

Belongs to the glutaminase PdxT/SNO family. In the presence of PdxS, forms a dodecamer of heterodimers. Only shows activity in the heterodimer.

It catalyses the reaction aldehydo-D-ribose 5-phosphate + D-glyceraldehyde 3-phosphate + L-glutamine = pyridoxal 5'-phosphate + L-glutamate + phosphate + 3 H2O + H(+). It carries out the reaction L-glutamine + H2O = L-glutamate + NH4(+). It functions in the pathway cofactor biosynthesis; pyridoxal 5'-phosphate biosynthesis. Catalyzes the hydrolysis of glutamine to glutamate and ammonia as part of the biosynthesis of pyridoxal 5'-phosphate. The resulting ammonia molecule is channeled to the active site of PdxS. The chain is Pyridoxal 5'-phosphate synthase subunit PdxT from Sulfurisphaera tokodaii (strain DSM 16993 / JCM 10545 / NBRC 100140 / 7) (Sulfolobus tokodaii).